We begin with the raw amino-acid sequence, 351 residues long: Deoxyguanosinetriphosphate triphosphohydrolase-like protein (351 aa).

Residues 75–196 form the HD domain; sequence RLTHTLEVAE…VRVADIIAYL (122 aa).

This sequence belongs to the dGTPase family. Type 2 subfamily.

This Desulfatibacillum aliphaticivorans protein is Deoxyguanosinetriphosphate triphosphohydrolase-like protein.